We begin with the raw amino-acid sequence, 431 residues long: Enolase (431 aa).

Q167 serves as a coordination point for (2R)-2-phosphoglycerate. Residue E209 is the Proton donor of the active site. Mg(2+) is bound by residues D246, E289, and D316. (2R)-2-phosphoglycerate contacts are provided by K341, R370, S371, and K392. K341 (proton acceptor) is an active-site residue.

This sequence belongs to the enolase family. As to quaternary structure, component of the RNA degradosome, a multiprotein complex involved in RNA processing and mRNA degradation. It depends on Mg(2+) as a cofactor.

The protein localises to the cytoplasm. Its subcellular location is the secreted. It is found in the cell surface. The catalysed reaction is (2R)-2-phosphoglycerate = phosphoenolpyruvate + H2O. Its pathway is carbohydrate degradation; glycolysis; pyruvate from D-glyceraldehyde 3-phosphate: step 4/5. In terms of biological role, catalyzes the reversible conversion of 2-phosphoglycerate (2-PG) into phosphoenolpyruvate (PEP). It is essential for the degradation of carbohydrates via glycolysis. The sequence is that of Enolase from Hahella chejuensis (strain KCTC 2396).